Reading from the N-terminus, the 331-residue chain is Histone-lysine N-methyltransferase, H3 lysine-9 specific dim-5 (331 aa).

A Pre-SET domain is found at 77 to 159 (VGCSCASDEE…DCPNRVVERG (83 aa)). Zn(2+) is bound by residues Cys-79, Cys-81, Cys-87, Cys-92, Cys-94, Cys-141, Cys-145, Cys-147, and Cys-151. Residues 162 to 297 (VPLQIFRTKD…KGTELTFDYV (136 aa)) form the SET domain. S-adenosyl-L-methionine-binding positions include 172-174 (RGW), Asp-215, Tyr-217, Arg-251, and 254-255 (NH). Residues Cys-257, Cys-319, Cys-321, and Cys-326 each contribute to the Zn(2+) site. A Post-SET domain is found at 315-331 (EMTKCLCGTAKCRGYLW).

It belongs to the class V-like SAM-binding methyltransferase superfamily. Histone-lysine methyltransferase family. Suvar3-9 subfamily.

It localises to the nucleus. Its subcellular location is the chromosome. The catalysed reaction is L-lysyl(9)-[histone H3] + 3 S-adenosyl-L-methionine = N(6),N(6),N(6)-trimethyl-L-lysyl(9)-[histone H3] + 3 S-adenosyl-L-homocysteine + 3 H(+). Histone methyltransferase that specifically trimethylates histone H3 to form H3K9me3. H3K9me3 marks chromatin regions for DNA methylation. Dim-5 recognizes Arg-8 to Gly-12 of the H3 tail with Thr-11 and Gly-12 being the most important specificity determinants, the recognition of whcih is important to distinguish H3K9 from H3K27 and H4K20. This Neurospora crassa (strain ATCC 24698 / 74-OR23-1A / CBS 708.71 / DSM 1257 / FGSC 987) protein is Histone-lysine N-methyltransferase, H3 lysine-9 specific dim-5 (dim-5).